Here is a 435-residue protein sequence, read N- to C-terminus: GPI-anchor transamidase component PIGU (435 aa).

At Met-1–Ala-3 the chain is on the cytoplasmic side. The chain crosses the membrane as a helical span at residues Pro-4–Ser-22. Residues Ser-23 to Asp-78 are Lumenal-facing. Residues Tyr-79–Ile-99 form a helical membrane-spanning segment. Residues Gln-100 to Ile-136 are Cytoplasmic-facing. Transmembrane regions (helical) follow at residues Pro-137–Ser-158, Thr-159–Ser-178, Val-179–Leu-194, and Tyr-195–Leu-205. Residues Tyr-206–Phe-222 lie on the Cytoplasmic side of the membrane. Residue Lys-216 coordinates a cardiolipin. The chain crosses the membrane as a helical span at residues Trp-223 to Ser-244. The Lumenal portion of the chain corresponds to Phe-245 to Ser-286. Residues Leu-287–Ile-306 traverse the membrane as a helical segment. At Lys-307 to His-311 the chain is on the cytoplasmic side. An a cardiolipin-binding site is contributed by Lys-309. The next 2 membrane-spanning stretches (helical) occupy residues Pro-312–Thr-331 and Val-332–Trp-345. Topologically, residues Asn-346–Asn-354 are cytoplasmic. A helical membrane pass occupies residues Val-355–Leu-372. The Lumenal segment spans residues Trp-373–Ser-384. 2 residues coordinate a 2-acyl-6-[6-phosphoethanolamine-alpha-D-mannosyl-(1-&gt;2)-6-phosphoethanolamine-alpha-D-mannosyl-(1-&gt;6)-2-phosphoethanolamine-alpha-D-mannosyl-(1-&gt;4)-alpha-D-glucosaminyl]-1-(1-radyl,2-acyl-sn-glycero-3-phospho)-1D-myo-inositol: Asn-383 and Asn-385. The chain crosses the membrane as a helical span at residues Asn-385 to Phe-406. Over Tyr-407–Lys-435 the chain is Cytoplasmic.

Belongs to the PIGU family. In terms of assembly, heteropentamer. Part of the GPI-anchor transamidase complex, consisting of PIGK, PIGT, PIGS, PIGU and GAA1.

The protein resides in the endoplasmic reticulum membrane. It functions in the pathway glycolipid biosynthesis; glycosylphosphatidylinositol-anchor biosynthesis. In terms of biological role, component of the glycosylphosphatidylinositol-anchor (GPI-anchor) transamidase (GPI-T) complex that catalyzes the formation of the linkage between a proprotein and a GPI-anchor and participates in GPI anchored protein biosynthesis. Binds the lipid portion of GPI-anchor. May act as an organizer in the transmembrane layer to recruit other subunits, and thus is essential for assembly of the complex. The protein is GPI-anchor transamidase component PIGU of Cricetulus griseus (Chinese hamster).